A 302-amino-acid polypeptide reads, in one-letter code: N-acetylmuramic acid 6-phosphate etherase (302 aa).

One can recognise an SIS domain in the interval 58-221; that stretch reads IGESFLNGGR…STGAMVKTGK (164 aa). Residue Glu-86 is the Proton donor of the active site. The active site involves Glu-117.

Belongs to the GCKR-like family. MurNAc-6-P etherase subfamily. As to quaternary structure, homodimer.

It carries out the reaction N-acetyl-D-muramate 6-phosphate + H2O = N-acetyl-D-glucosamine 6-phosphate + (R)-lactate. It functions in the pathway amino-sugar metabolism; N-acetylmuramate degradation. Specifically catalyzes the cleavage of the D-lactyl ether substituent of MurNAc 6-phosphate, producing GlcNAc 6-phosphate and D-lactate. This is N-acetylmuramic acid 6-phosphate etherase from Clostridium botulinum (strain Langeland / NCTC 10281 / Type F).